We begin with the raw amino-acid sequence, 367 residues long: Ribosomal lysine N-methyltransferase 5 (367 aa).

The segment at Glu55 to Glu74 is disordered. Residues Arg58–Lys68 show a composition bias toward basic residues. S-adenosyl-L-methionine contacts are provided by residues Trp110, Gly170–Gly172, Asp192, Trp256, and Met288.

The protein belongs to the class I-like SAM-binding methyltransferase superfamily. RKM5 family.

S-adenosyl-L-methionine-dependent protein-lysine N-methyltransferase that monomethylates 60S ribosomal protein L1 (RPL1A and RPL1B) at 'Lys-46'. This Saccharomyces cerevisiae (strain AWRI796) (Baker's yeast) protein is Ribosomal lysine N-methyltransferase 5 (RKM5).